Reading from the N-terminus, the 770-residue chain is MFRYESLEDCPLDEDEDAFQGLGEEDEEIDQFNDDTFGSGAVDDDWQEAHERLAELEEKLPVAVNEQTGNGERDEMDLLGDHEENLAERLSKMVIENELEDPAIMRAVQTRPVLQPQPGSLNSSIWDGSEVLRRIRGPLLAQEMPTVSVLEYALPQRPPQGPEDDRDLSERALPRRSTSPIIGSPPVRAVPIGTPPKQMAVPSFTQQILCPKPVHVRPPMPPRYPAPYGERMSPNQLCSVPNSSLLGHPFPPSVPPVLSPLQRAQLLGGAQLQPGRMSPSQFARVPGFVGSPLAAMNPKLLQGRVGQMLPPAPGFRAFFSAPPSATPPPQQHPPGPGPHLQNLRSQAPMFRPDTTHLHPQHRRLLHQRQQQNRSQHRNLNGAGDRGSHRSSHQDHLRKDPYANLMLQREKDWVSKIQMMQLQSTDPYLDDFYYQNYFEKLEKLSAAEEIQGDGPKKERTKLITPQVAKLEHAYKPVQFEGSLGKLTVSSVNNPRKMIDAVVTSRSEDDETKEKQVRDKRRKTLVIIEKTYSLLLDVEDYERRYLLSLEEERPALMDDRKHKICSMYDNLRGKLPGQERPSDDHFVQIMCIRKGKRMVARILPFLSTEQAADILMTTARNLPFLIKKDAQDEVLPCLLSPFSLLLYHLPSVSITSLLRQLMNLPQSAATPALSNPHLTAVLQNKFGLSLLLILLSRGEDLQSSDPATESTQNNQWTEVMFMATRELLRIPQAALAKPISIPTNLVSLFSRYVDRQKLNLLETKLQLVQGIR.

The tract at residues 1–26 is disordered; that stretch reads MFRYESLEDCPLDEDEDAFQGLGEED. The region A; interaction with DDX6/RCK stretch occupies residues 1 to 84; sequence MFRYESLEDC…EMDLLGDHEE (84 aa). The segment at 1-397 is involved in nuclear foci localization; that stretch reads MFRYESLEDC…HRSSHQDHLR (397 aa). Over residues 7–26 the composition is skewed to acidic residues; that stretch reads LEDCPLDEDEDAFQGLGEED. The tract at residues 85–388 is region N; interaction with decapping machinery; sequence NLAERLSKMV…LNGAGDRGSH (304 aa). Positions 86 to 95 match the Nuclear export signal motif; the sequence is LAERLSKMVI. Position 177 is a phosphoserine (S177). T178 bears the Phosphothreonine mark. Phosphoserine occurs at positions 179 and 184. A Phosphothreonine modification is found at T194. R217, R223, and R263 each carry asymmetric dimethylarginine. The tract at residues 223 to 397 is involved in RNA-binding; sequence RYPAPYGERM…HRSSHQDHLR (175 aa). S278 bears the Phosphoserine mark. At R284 the chain carries Asymmetric dimethylarginine. Residues 314-323 are compositionally biased toward low complexity; sequence GFRAFFSAPP. Disordered regions lie at residues 314 to 344 and 360 to 399; these read GFRAFFSAPPSATPPPQQHPPGPGPHLQNLR and QHRRLLHQRQQQNRSQHRNLNGAGDRGSHRSSHQDHLRKD. A compositionally biased stretch (pro residues) spans 324 to 337; the sequence is SATPPPQQHPPGPG. Residues 367–380 show a composition bias toward low complexity; sequence QRQQQNRSQHRNLN. R385 is modified (omega-N-methylarginine). A compositionally biased stretch (basic and acidic residues) spans 385–399; it reads RGSHRSSHQDHLRKD. The tract at residues 389-448 is region H; sequence RSSHQDHLRKDPYANLMLQREKDWVSKIQMMQLQSTDPYLDDFYYQNYFEKLEKLSAAEE. The tract at residues 398 to 770 is involved in nuclear speckle localization; that stretch reads KDPYANLMLQ…TKLQLVQGIR (373 aa). A region C region spans residues 449–770; that stretch reads IQGDGPKKER…TKLQLVQGIR (322 aa).

It belongs to the PAT1 family. Interacts (via region A) with DDX6/RCK. Interacts (via region H and region C) with LSM1 and LSM4. Interacts (via region N) with DCP1A, DCP2, EDC3, EDC4 and XRN1. Interacts with the CCR4-NOT complex. Interacts with the Lsm-containing SMN-Sm protein complex. Interacts with EIF4ENIF1/4E-T. As to expression, ubiquitous.

Its subcellular location is the cytoplasm. The protein resides in the P-body. The protein localises to the nucleus. It is found in the PML body. It localises to the nucleus speckle. In terms of biological role, RNA-binding protein involved in deadenylation-dependent decapping of mRNAs, leading to the degradation of mRNAs. Acts as a scaffold protein that connects deadenylation and decapping machinery. Required for cytoplasmic mRNA processing body (P-body) assembly. (Microbial infection) In case of infection, required for translation and replication of hepatitis C virus (HCV). In Homo sapiens (Human), this protein is Protein PAT1 homolog 1 (PATL1).